The chain runs to 1603 residues: Protein TIC 214 (1603 aa).

6 helical membrane-spanning segments follow: residues 11-31 (VLWASILSWINISSPLILFGL), 58-78 (LSGTVAVSGLILGQLIIFLSI), 86-106 (LLLKPHTVTLLVLPYLLFYWY), 131-151 (IFFDSFIFQLLNPVLLPSPIL), 167-187 (LFVLSCFFGWLSGHLFFFNCI), and 213-233 (FSIFVLACILLYLGRAPVPFF).

The protein belongs to the TIC214 family. Part of the Tic complex.

It localises to the plastid. Its subcellular location is the chloroplast inner membrane. Functionally, involved in protein precursor import into chloroplasts. May be part of an intermediate translocation complex acting as a protein-conducting channel at the inner envelope. The sequence is that of Protein TIC 214 from Physcomitrium patens (Spreading-leaved earth moss).